We begin with the raw amino-acid sequence, 512 residues long: GMP synthase [glutamine-hydrolyzing] (512 aa).

The region spanning 7–197 is the Glutamine amidotransferase type-1 domain; it reads TIIVLDFGSQ…VFGVCGCSEG (191 aa). Residue Cys-84 is the Nucleophile of the active site. Catalysis depends on residues His-171 and Glu-173. A GMPS ATP-PPase domain is found at 198-387; that stretch reads WNMENFIEVE…LGIPDEIVWR (190 aa). 225-231 serves as a coordination point for ATP; sequence SGGVDSS.

Homodimer.

It carries out the reaction XMP + L-glutamine + ATP + H2O = GMP + L-glutamate + AMP + diphosphate + 2 H(+). The protein operates within purine metabolism; GMP biosynthesis; GMP from XMP (L-Gln route): step 1/1. In terms of biological role, catalyzes the synthesis of GMP from XMP. This chain is GMP synthase [glutamine-hydrolyzing], found in Bacillus cytotoxicus (strain DSM 22905 / CIP 110041 / 391-98 / NVH 391-98).